The primary structure comprises 347 residues: Fructose-1,6-bisphosphatase class 1 (347 aa).

Mg(2+) contacts are provided by Glu107, Asp128, Leu130, and Asp131. Residues 131 to 134 (DGSS), Asn224, Tyr257, and Lys286 each bind substrate. Glu292 contacts Mg(2+).

The protein belongs to the FBPase class 1 family. Homotetramer. Mg(2+) is required as a cofactor.

It localises to the cytoplasm. It catalyses the reaction beta-D-fructose 1,6-bisphosphate + H2O = beta-D-fructose 6-phosphate + phosphate. The protein operates within carbohydrate biosynthesis; gluconeogenesis. This Sorangium cellulosum (strain So ce56) (Polyangium cellulosum (strain So ce56)) protein is Fructose-1,6-bisphosphatase class 1.